Here is a 494-residue protein sequence, read N- to C-terminus: MKYSDLRDFISQLQQMGELKRINVPVSPYLEMTEICDRTLRAAGPALLFEQPTGQKIPVLGNLFGTPHRVALGMGATDVSELRKIGHVLAMLKEPEPPKGFKDIMGLGSLVKSIWDMAPKELRGAPCHDIVWEGNDVDLARLPIQHCWPGDIAPLITWGLVITKGPHKKRQNLGIYRQQVIGRNKVIMRWLAQRGGALDFREHSIVNRGQPYPIAVALGADPATILGAVTPVPDSLSEYQFAGLLRGSRTELVKALGSELRVPASAEIVLEGHIYPDESHPSGYEHALEGPYGDHTGYYNEQDSFPVFTIDRITMRRDPIYHSTYTGKPPDEPAVLGVALNEVFIPLLQKQFSEILDFYLPPEGCSYRMAVVQMKKAYPGHAKRVMFGVWSFLRQFMYTKFIVVVDEDVNIRDWKEVIWAITTRVDPIRDTTLVDNTPIDYLDFASPVSGLGSKMGIDATNKWPGETDREWGRTITMTDEVKKRVDQIWQELGI.

Asn-172 is a Mn(2+) binding site. Prenylated FMN contacts are provided by residues 175 to 177 (IYR), 189 to 191 (RWL), and 194 to 195 (RG). Mn(2+) is bound at residue Glu-238. Asp-294 acts as the Proton donor in catalysis.

It belongs to the UbiD family. Homohexamer. Requires prenylated FMN as cofactor. Mn(2+) serves as cofactor.

Its subcellular location is the cell membrane. It carries out the reaction a 4-hydroxy-3-(all-trans-polyprenyl)benzoate + H(+) = a 2-(all-trans-polyprenyl)phenol + CO2. It functions in the pathway cofactor biosynthesis; ubiquinone biosynthesis. In terms of biological role, catalyzes the decarboxylation of 3-octaprenyl-4-hydroxy benzoate to 2-octaprenylphenol, an intermediate step in ubiquinone biosynthesis. This is 3-octaprenyl-4-hydroxybenzoate carboxy-lyase from Janthinobacterium sp. (strain Marseille) (Minibacterium massiliensis).